The primary structure comprises 130 residues: Ribonuclease P protein component (130 aa).

It belongs to the RnpA family. Consists of a catalytic RNA component (M1 or rnpB) and a protein subunit.

It carries out the reaction Endonucleolytic cleavage of RNA, removing 5'-extranucleotides from tRNA precursor.. In terms of biological role, RNaseP catalyzes the removal of the 5'-leader sequence from pre-tRNA to produce the mature 5'-terminus. It can also cleave other RNA substrates such as 4.5S RNA. The protein component plays an auxiliary but essential role in vivo by binding to the 5'-leader sequence and broadening the substrate specificity of the ribozyme. This is Ribonuclease P protein component from Desulfovibrio desulfuricans (strain ATCC 27774 / DSM 6949 / MB).